We begin with the raw amino-acid sequence, 494 residues long: Monocarboxylate transporter 1 (494 aa).

Topologically, residues 1-22 (MPPAIGGPVGYTPPDGGWGWAV) are cytoplasmic. The helical transmembrane segment at 23-44 (VVGAFISIGFSYAFPKSITVFF) threads the bilayer. Residue lysine 38 participates in (S)-lactate binding. Topologically, residues 45–55 (KEIEIIFSATT) are extracellular. Residues 56–80 (SEVSWISSIMLAVMYAGGPISSILV) traverse the membrane as a helical segment. Over 81-84 (NKYG) the chain is Cytoplasmic. The helical transmembrane segment at 85-105 (SRPVMIAGGCLSGCGLIAASF) threads the bilayer. The Extracellular segment spans residues 106–109 (CNTV). The chain crosses the membrane as a helical span at residues 110–132 (QELYFCIGVIGGLGLAFNLNPAL). Residues 133–146 (TMIGKYFYKKRPLA) lie on the Cytoplasmic side of the membrane. The helical transmembrane segment at 147 to 169 (NGLAMAGSPVFLSTLAPLNQAFF) threads the bilayer. The Extracellular segment spans residues 170–174 (GIFGW). A helical membrane pass occupies residues 175–194 (RGSFLILGGLLLNCCVAGSL). The Cytoplasmic portion of the chain corresponds to 195–254 (MRPIGPQQGKVEKLKSKESLQEAGKSDANTDLIGGSPKGEKLSVFQTVNKFLDLSLFTHR). Residues serine 210, serine 213, and serine 220 each carry the phosphoserine modification. The residue at position 224 (threonine 224) is a Phosphothreonine. At serine 230 the chain carries Phosphoserine. A helical membrane pass occupies residues 255-281 (GFLLYLSGNVVMFFGLFTPLVFLSNYG). Topologically, residues 282–288 (KSKHFSS) are extracellular. A helical transmembrane segment spans residues 289 to 310 (EKSAFLLSILAFVDMVARPSMG). Aspartate 302 lines the H(+) pocket. Arginine 306 serves as a coordination point for (S)-lactate. Over 311–321 (LAANTRWIRPR) the chain is Cytoplasmic. The helical transmembrane segment at 322–342 (VQYFFAASVVANGVCHLLAPL) threads the bilayer. Residues 343 to 346 (STTY) lie on the Extracellular side of the membrane. Residues 347–368 (VGFCIYAGVFGFAFGWLSSVLF) form a helical membrane-spanning segment. At 369–382 (ETLMDLVGPQRFSS) the chain is on the cytoplasmic side. Residues 383 to 403 (AVGLVTIVECCPVLLGPPLLG) form a helical membrane-spanning segment. At 404–414 (RLNDMYGDYKY) the chain is on the extracellular side. A helical membrane pass occupies residues 415–436 (TYWACGVILIIAGLYLFIGMGI). Topologically, residues 437 to 494 (NYRLVAKEQKAEEKKRDGKEDETSTDVDEKPKKTMKETQSPAPLQNSSGDPAEEESPV) are cytoplasmic. The span at 446–472 (KAEEKKRDGKEDETSTDVDEKPKKTMK) shows a compositional bias: basic and acidic residues. Residues 446 to 494 (KAEEKKRDGKEDETSTDVDEKPKKTMKETQSPAPLQNSSGDPAEEESPV) form a disordered region. Threonine 459 carries the phosphothreonine modification. Serine 460 is subject to Phosphoserine. The residue at position 461 (threonine 461) is a Phosphothreonine. Over residues 473-485 (ETQSPAPLQNSSG) the composition is skewed to polar residues. Serine 476, serine 483, serine 484, and serine 492 each carry phosphoserine.

This sequence belongs to the major facilitator superfamily. Monocarboxylate porter (TC 2.A.1.13) family. As to quaternary structure, interacts with BSG. Interacts with EMB. Interaction with either BSG or EMB is required for expression at the cell membrane. As to expression, detected in erythrocytes (at protein level). Detected in brain, heart, kidney, lung, muscle, jejunum enterocytes and brain capillaries.

It is found in the cell membrane. Its subcellular location is the basolateral cell membrane. It localises to the apical cell membrane. The catalysed reaction is (S)-lactate(in) + H(+)(in) = (S)-lactate(out) + H(+)(out). The enzyme catalyses pyruvate(out) + H(+)(out) = pyruvate(in) + H(+)(in). It catalyses the reaction acetoacetate(out) + H(+)(out) = acetoacetate(in) + H(+)(in). It carries out the reaction (S)-3-hydroxybutanoate(out) + H(+)(out) = (S)-3-hydroxybutanoate(in) + H(+)(in). The catalysed reaction is (R)-3-hydroxybutanoate(out) + H(+)(out) = (R)-3-hydroxybutanoate(in) + H(+)(in). The enzyme catalyses 3-methyl-2-oxobutanoate(out) + H(+)(out) = 3-methyl-2-oxobutanoate(in) + H(+)(in). It catalyses the reaction 4-methyl-2-oxopentanoate(out) + H(+)(out) = 4-methyl-2-oxopentanoate(in) + H(+)(in). Its activity is regulated as follows. Inhibited by stilbene disulfonates, such as di-isothiocyanostilbene disulfonate(DIDS), a cross-linking reagent that forms covalent linkages with lysine groups. Its function is as follows. Bidirectional proton-coupled monocarboxylate transporter. Catalyzes the rapid transport across the plasma membrane of many monocarboxylates such as lactate, pyruvate, acetate and the ketone bodies acetoacetate and beta-hydroxybutyrate, and thus contributes to the maintenance of intracellular pH. The transport direction is determined by the proton motive force and the concentration gradient of the substrate monocarboxylate. MCT1 is a major lactate exporter. Plays a role in cellular responses to a high-fat diet by modulating the cellular levels of lactate and pyruvate that contribute to the regulation of central metabolic pathways and insulin secretion, with concomitant effects on plasma insulin levels and blood glucose homeostasis. Facilitates the protonated monocarboxylate form of succinate export, that its transient protonation upon muscle cell acidification in exercising muscle and ischemic heart. Functions via alternate outward- and inward-open conformation states. Protonation and deprotonation of 302-Asp is essential for the conformational transition. This is Monocarboxylate transporter 1 (Slc16a1) from Rattus norvegicus (Rat).